Consider the following 160-residue polypeptide: MKLEVLPLDQKTFSAYGDVIETQERDFFHINNGLVERYHDLAKVEVLEQDRTLISINRAQPAAMPIVVHELERHPLGTQAFVPMNGEAFVVIVALGDDKPDLSTLRAFISNGRQGVNYHRNVWHHPLFAWQTVTDFLTVDRGGSDNCDVESIPTHELCFA.

The protein belongs to the ureidoglycolate lyase family. In terms of assembly, homodimer. The cofactor is Ni(2+).

It carries out the reaction (S)-ureidoglycolate = urea + glyoxylate. It functions in the pathway nitrogen metabolism; (S)-allantoin degradation. In terms of biological role, catalyzes the catabolism of the allantoin degradation intermediate (S)-ureidoglycolate, generating urea and glyoxylate. Involved in the utilization of allantoin as nitrogen source. The sequence is that of Ureidoglycolate lyase from Salmonella agona (strain SL483).